The sequence spans 312 residues: Olfactory receptor OR51C1 (312 aa).

The Extracellular portion of the chain corresponds to 1 to 26 (MGSNITSTSIIFLLTGVPGLEAFHTW). Residues 27 to 47 (ISIPFCFLSVTALLGNSLILF) traverse the membrane as a helical segment. The Cytoplasmic segment spans residues 48–66 (ATITQPSLHEPMYYFLSML). A helical membrane pass occupies residues 67-87 (SATDLGLSISTLVTMLSIFWF). At 88-99 (NVREISFNACLS) the chain is on the extracellular side. Cysteines 97 and 179 form a disulfide. A helical membrane pass occupies residues 100–120 (HMFFIKFFTVMESSVLLAMAF). At 121–143 (DRFVAVSNPLRYAMILTDSRIAQ) the chain is on the cytoplasmic side. The helical transmembrane segment at 144–164 (IGVASVIRGLLMLTPMVALLI) threads the bilayer. Residues 165–201 (RLSYCHSQVLHHSYCYHPDVMKLSCTDTRINSAVGLT) lie on the Extracellular side of the membrane. A helical transmembrane segment spans residues 202–222 (AMFSTVGVDLLLILLSYVLII). At 223 to 240 (RTVLSVASPEERKETFST) the chain is on the cytoplasmic side. Residues 241 to 261 (CVSHIVAFAIYYIPLISLSIV) traverse the membrane as a helical segment. Residues 262–273 (HRFGKQAPAYVH) lie on the Extracellular side of the membrane. Residues 274–294 (TMIANTYLLISPLMNPVIYSV) form a helical membrane-spanning segment. Topologically, residues 295–312 (KTKQIRRAVIKILHSKET) are cytoplasmic.

This sequence belongs to the G-protein coupled receptor 1 family.

The protein localises to the membrane. In terms of biological role, odorant receptor. This Homo sapiens (Human) protein is Olfactory receptor OR51C1.